The sequence spans 360 residues: Photosystem II protein D1 1 (360 aa).

At 2–31 (TTTLQRRESANLWERFCNWVTSTDNRLYVG) the chain is on the cytoplasmic side. The chain crosses the membrane as a helical span at residues 32–53 (WFGVIMIPTLLAATICFVIAFI). The Lumenal portion of the chain corresponds to 54–110 (AAPPVDIDGIREPVSGSLLYGNNIITGAVVPSSNAIGLHFYPIWEAASLDEWLYNGG). The chain crosses the membrane as a helical span at residues 111 to 132 (PYQLIIFHFLLGASCYMGRQWE). H118 is a chlorophyll a binding site. Positions 126 and 130 each coordinate pheophytin a. Residues 133–142 (LSYRLGMRPW) lie on the Cytoplasmic side of the membrane. A helical membrane pass occupies residues 143–163 (ICVAYSAPLASAFAVFLIYPI). Y147 contacts pheophytin a. The Lumenal portion of the chain corresponds to 164 to 191 (GQGSFSDGMPLGISGTFNFMIVFQAEHN). Residues D170 and E189 each contribute to the [CaMn4O5] cluster site. The helical transmembrane segment at 192–217 (ILMHPFHQLGVAGVFGGALFCAMHGS) threads the bilayer. Residue H198 coordinates chlorophyll a. A quinone is bound by residues H215 and 264–265 (SF). H215 provides a ligand contact to Fe cation. Over 218-272 (LVTSSLIRETTETESANYGYKFGQEEETYNIVAAHGYFGRLIFQYASFNNSRSLH) the chain is Cytoplasmic. H272 provides a ligand contact to Fe cation. Residues 273–295 (FFLAAWPVVGVWFTALGISTMAF) traverse the membrane as a helical segment. Residues 296–344 (NLNGFNFNHSVIDAKGNVINTWADIINRANLGMEVMHERNAHNFPLDLA) lie on the Lumenal side of the membrane. [CaMn4O5] cluster contacts are provided by H332, E333, D342, and A344. Positions 345–360 (SAESAPVAMIAPSING) are excised as a propeptide.

This sequence belongs to the reaction center PufL/M/PsbA/D family. As to quaternary structure, PSII is composed of 1 copy each of membrane proteins PsbA, PsbB, PsbC, PsbD, PsbE, PsbF, PsbH, PsbI, PsbJ, PsbK, PsbL, PsbM, PsbT, PsbX, PsbY, PsbZ, Psb30/Ycf12, peripheral proteins PsbO, CyanoQ (PsbQ), PsbU, PsbV and a large number of cofactors. It forms dimeric complexes. Precursor protein interacts with Ycf48. Part of a photosystem II (PSII) assembly intermediate complex PSII-I; crystallized from a strain deleted of psbJ, it forms monomeric PSII before addition of the oxygen evolving complex. PSII-I includes 3 assembly factors not found in mature PSII (Psb27, Psb28 and Psb34). In PSII-I the C-terminus of D1 (this subunit) is already processed but not yet found at its final position. The cofactor is The D1/D2 heterodimer binds P680, chlorophylls that are the primary electron donor of PSII, and subsequent electron acceptors. It shares a non-heme iron and each subunit binds pheophytin, quinone, additional chlorophylls, carotenoids and lipids. D1 provides most of the ligands for the Mn4-Ca-O5 cluster of the oxygen-evolving complex (OEC). There is also a Cl(-1) ion associated with D1 and D2, which is required for oxygen evolution. PSII binds additional chlorophylls, carotenoids and specific lipids.. Post-translationally, C-terminally processed by CtpA; processing is essential to allow assembly of the oxygen-evolving complex and thus photosynthetic growth. Tyr-161 forms a radical intermediate that is referred to as redox-active TyrZ, YZ or Y-Z.

It localises to the cellular thylakoid membrane. The catalysed reaction is 2 a plastoquinone + 4 hnu + 2 H2O = 2 a plastoquinol + O2. Its function is as follows. Photosystem II (PSII) is a light-driven water:plastoquinone oxidoreductase that uses light energy to abstract electrons from H(2)O, generating O(2) and a proton gradient subsequently used for ATP formation. It consists of a core antenna complex that captures photons, and an electron transfer chain that converts photonic excitation into a charge separation. The D1/D2 (PsbA/PsbD) reaction center heterodimer binds P680, the primary electron donor of PSII as well as several subsequent electron acceptors. This is Photosystem II protein D1 1 from Thermosynechococcus vestitus (strain NIES-2133 / IAM M-273 / BP-1).